Consider the following 102-residue polypeptide: Large ribosomal subunit protein bL21 (102 aa).

This sequence belongs to the bacterial ribosomal protein bL21 family. In terms of assembly, part of the 50S ribosomal subunit. Contacts protein L20.

This protein binds to 23S rRNA in the presence of protein L20. This chain is Large ribosomal subunit protein bL21, found in Citrifermentans bemidjiense (strain ATCC BAA-1014 / DSM 16622 / JCM 12645 / Bem) (Geobacter bemidjiensis).